Here is a 200-residue protein sequence, read N- to C-terminus: Charged multivesicular body protein 6-B (200 aa).

A lipid anchor (N-myristoyl glycine) is attached at glycine 2. Residues arginine 9–glutamate 102 adopt a coiled-coil conformation. The interval glutamine 165–serine 200 is disordered. The Type-2 MIT-interacting motif signature appears at leucine 168–serine 179.

The protein belongs to the SNF7 family. Probable core component of the endosomal sorting required for transport complex III (ESCRT-III). ESCRT-III components are thought to multimerize to form a flat lattice on the perimeter membrane of the endosome.

It is found in the endomembrane system. It localises to the late endosome membrane. Functionally, probable core component of the endosomal sorting required for transport complex III (ESCRT-III) which is involved in multivesicular bodies (MVBs) formation and sorting of endosomal cargo proteins into MVBs. MVBs contain intraluminal vesicles (ILVs) that are generated by invagination and scission from the limiting membrane of the endosome and mostly are delivered to lysosomes enabling degradation of membrane proteins, such as stimulated growth factor receptors, lysosomal enzymes and lipids. In the ESCRT-III complex, it probably serves as an acceptor for the ESCRT-II complex on endosomal membranes. The polypeptide is Charged multivesicular body protein 6-B (chmp6-b) (Xenopus laevis (African clawed frog)).